The chain runs to 48 residues: GIINDRETGRSRGFGFVTFNNEKGFGFVTFNNEKGFGFVTFNNEKSMR.

The polypeptide is Glycine-rich RNA-binding protein 2 (Populus euphratica (Euphrates poplar)).